We begin with the raw amino-acid sequence, 861 residues long: Bifunctional uridylyltransferase/uridylyl-removing enzyme (861 aa).

The uridylyltransferase stretch occupies residues 1–321 (MKNDNRIIKN…VYHQKQKIIR (321 aa)). The tract at residues 322 to 678 (LDDEFQLSNR…IMPHHSQGGT (357 aa)) is uridylyl-removing. Positions 440-562 (VDQHTLFVIR…LPHAKYLDYL (123 aa)) constitute an HD domain. ACT domains follow at residues 679 to 760 (EVFI…AVSR) and 788 to 861 (QLFL…KSKY).

Belongs to the GlnD family. Requires Mg(2+) as cofactor.

It catalyses the reaction [protein-PII]-L-tyrosine + UTP = [protein-PII]-uridylyl-L-tyrosine + diphosphate. The enzyme catalyses [protein-PII]-uridylyl-L-tyrosine + H2O = [protein-PII]-L-tyrosine + UMP + H(+). Its activity is regulated as follows. Uridylyltransferase (UTase) activity is inhibited by glutamine, while glutamine activates uridylyl-removing (UR) activity. Functionally, modifies, by uridylylation and deuridylylation, the PII regulatory proteins (GlnB and homologs), in response to the nitrogen status of the cell that GlnD senses through the glutamine level. Under low glutamine levels, catalyzes the conversion of the PII proteins and UTP to PII-UMP and PPi, while under higher glutamine levels, GlnD hydrolyzes PII-UMP to PII and UMP (deuridylylation). Thus, controls uridylylation state and activity of the PII proteins, and plays an important role in the regulation of nitrogen assimilation and metabolism. This is Bifunctional uridylyltransferase/uridylyl-removing enzyme from Legionella pneumophila (strain Lens).